Here is a 411-residue protein sequence, read N- to C-terminus: 2,3-bisphosphoglycerate-independent phosphoglycerate mutase (411 aa).

The disordered stretch occupies residues 164–190 (VSSNDPKKEGVQPLTIRPGSDDPADAK).

Belongs to the BPG-independent phosphoglycerate mutase family. A-PGAM subfamily.

The catalysed reaction is (2R)-2-phosphoglycerate = (2R)-3-phosphoglycerate. The protein operates within carbohydrate degradation; glycolysis; pyruvate from D-glyceraldehyde 3-phosphate: step 3/5. Functionally, catalyzes the interconversion of 2-phosphoglycerate and 3-phosphoglycerate. The protein is 2,3-bisphosphoglycerate-independent phosphoglycerate mutase of Methanoculleus marisnigri (strain ATCC 35101 / DSM 1498 / JR1).